Reading from the N-terminus, the 443-residue chain is Probable D-serine dehydratase (443 aa).

K116 bears the N6-(pyridoxal phosphate)lysine mark.

Belongs to the serine/threonine dehydratase family. DsdA subfamily. The cofactor is pyridoxal 5'-phosphate.

The catalysed reaction is D-serine = pyruvate + NH4(+). This is Probable D-serine dehydratase from Bacillus cereus (strain ATCC 14579 / DSM 31 / CCUG 7414 / JCM 2152 / NBRC 15305 / NCIMB 9373 / NCTC 2599 / NRRL B-3711).